The primary structure comprises 960 residues: Probable glutamyl endopeptidase, chloroplastic (960 aa).

The N-terminal 62 residues, 1–62 (MMRFHKACHR…FSENPLTTVM (62 aa)), are a transit peptide targeting the chloroplast. Positions 78-98 (SGGAEDGGGTSNGSLSASATA) are disordered. The segment covering 89-98 (NGSLSASATA) has biased composition (polar residues). Active-site charge relay system residues include serine 780, aspartate 854, and histidine 888. The interval 915–960 (TSDADTSPDQSKEGSDSADKVSTGTGGGNPEFGEHEVHSKLRRSLL) is disordered. Over residues 924–933 (QSKEGSDSAD) the composition is skewed to basic and acidic residues.

Belongs to the peptidase S9D family.

Its subcellular location is the plastid. The protein resides in the chloroplast stroma. Functionally, serine-type protease active in vitro against the LHCII N-terminal. Cleaves its substrate on the carboxy-side of Glu residues. This chain is Probable glutamyl endopeptidase, chloroplastic (GEP), found in Arabidopsis thaliana (Mouse-ear cress).